A 185-amino-acid polypeptide reads, in one-letter code: Ribosome-recycling factor (185 aa).

It belongs to the RRF family.

It localises to the cytoplasm. Responsible for the release of ribosomes from messenger RNA at the termination of protein biosynthesis. May increase the efficiency of translation by recycling ribosomes from one round of translation to another. The polypeptide is Ribosome-recycling factor (Saccharophagus degradans (strain 2-40 / ATCC 43961 / DSM 17024)).